Consider the following 766-residue polypeptide: Transcription factor GTE4 (766 aa).

Disordered regions lie at residues 87–108 (GTNS…PGDD), 234–262 (RDTT…PMEE), and 388–412 (GDKL…GDVG). Residues 238-250 (DAQQPAGLTSDSA) show a composition bias toward polar residues. The Bromo domain occupies 416–522 (GAGTKVFKNC…QIFEERWAVI (107 aa)). Disordered regions lie at residues 544–606 (TMRS…NKRD) and 687–766 (ARAE…SDQT). A compositionally biased stretch (low complexity) spans 574 to 589 (PTTTPGRTPTSATPSG). The NET domain maps to 597–678 (PKANEPNKRD…NYKKGLSKKK (82 aa)). A compositionally biased stretch (low complexity) spans 736–766 (SRSSSSSSSSSSSSSSDSDSDSSSSSGSDQT).

As to expression, ubiquitously expressed.

The protein resides in the nucleus. Functionally, involved in the activation and maintenance of cell division in the meristems and by this controls cell numbers in differentiated organs. Its action in cell cycle regulation may be directed through the RB-E2F pathway. This is Transcription factor GTE4 (GTE4) from Arabidopsis thaliana (Mouse-ear cress).